Here is a 117-residue protein sequence, read N- to C-terminus: UPF0102 protein RHOS4_03930 (117 aa).

This sequence belongs to the UPF0102 family.

This is UPF0102 protein RHOS4_03930 from Cereibacter sphaeroides (strain ATCC 17023 / DSM 158 / JCM 6121 / CCUG 31486 / LMG 2827 / NBRC 12203 / NCIMB 8253 / ATH 2.4.1.) (Rhodobacter sphaeroides).